Consider the following 821-residue polypeptide: E3 ubiquitin-protein ligase RSP5 (821 aa).

The C2 domain occupies 1 to 112 (MGSNLPAQPN…QMGGDEMLTR (112 aa)). Composition is skewed to polar residues over residues 133-144 (TNLSTPNPNQAN) and 188-201 (LNPQ…RPTS). 2 disordered regions span residues 133–239 (TNLS…GWER) and 255–359 (RTTT…YFVD). Low complexity predominate over residues 202-217 (QIAPPNGAPPIANGQG). The WW 1 domain maps to 231–264 (GRLPAGWERREDNLGRTYYVDHNTRTTTWNRPSA). Residues 255 to 272 (RTTTWNRPSANYNEQTQR) are compositionally biased toward polar residues. A compositionally biased stretch (basic and acidic residues) spans 281–296 (LERRAHQNRMLPEDRT). The segment covering 297–312 (GASSPNLSETQPQAQT) has biased composition (polar residues). A compositionally biased stretch (low complexity) spans 320–339 (ASNSNVVSMMATGATTAGTG). WW domains follow at residues 339-372 (GELP…DPRR) and 399-432 (GPLP…DPRL). Residues 488–821 (SASDLKKRLM…VEETLGFGQE (334 aa)) form the HECT domain. Cys-789 serves as the catalytic Glycyl thioester intermediate.

This sequence belongs to the RSP5/NEDD4 family. Interacts with apyA and creD.

It localises to the cytoplasm. It carries out the reaction S-ubiquitinyl-[E2 ubiquitin-conjugating enzyme]-L-cysteine + [acceptor protein]-L-lysine = [E2 ubiquitin-conjugating enzyme]-L-cysteine + N(6)-ubiquitinyl-[acceptor protein]-L-lysine.. The protein operates within protein modification; protein ubiquitination. E3 ubiquitin-protein ligase which accepts ubiquitin from an E2 ubiquitin-conjugating enzyme in the form of a thioester and then directly transfers the ubiquitin to targeted substrates. Probably involved in the regulatory network controlling carbon source utilization. Ubiquitinates 'Lys-528' of the uric acid/xanthine transporter uapA at the cell membrane, leading to its internalization, sorting into the endosomal pathway to the vacuolar lumen where it is eventually degraded. This chain is E3 ubiquitin-protein ligase RSP5 (hulA), found in Emericella nidulans (strain FGSC A4 / ATCC 38163 / CBS 112.46 / NRRL 194 / M139) (Aspergillus nidulans).